The chain runs to 339 residues: GTPase Obg (339 aa).

Residues 1 to 159 (MKFVDEAFVR…RELKLELKLL (159 aa)) form the Obg domain. A disordered region spans residues 127-147 (NTHFKSSTNRAPRRTTSGEEG). Residues 160 to 333 (ADVGLLGLPN…LCYDLMSFLE (174 aa)) form the OBG-type G domain. GTP contacts are provided by residues 166 to 173 (GLPNAGKS), 191 to 195 (FTTLY), 213 to 216 (DIPG), 283 to 286 (NKID), and 314 to 316 (SAI). Serine 173 and threonine 193 together coordinate Mg(2+).

This sequence belongs to the TRAFAC class OBG-HflX-like GTPase superfamily. OBG GTPase family. Monomer. Requires Mg(2+) as cofactor.

The protein localises to the cytoplasm. In terms of biological role, an essential GTPase which binds GTP, GDP and possibly (p)ppGpp with moderate affinity, with high nucleotide exchange rates and a fairly low GTP hydrolysis rate. Plays a role in control of the cell cycle, stress response, ribosome biogenesis and in those bacteria that undergo differentiation, in morphogenesis control. This Coxiella burnetii (strain CbuG_Q212) (Coxiella burnetii (strain Q212)) protein is GTPase Obg.